Here is a 227-residue protein sequence, read N- to C-terminus: ATP synthase F(0) complex subunit a (227 aa).

6 helical membrane-spanning segments follow: residues 14–34 (LLGH…FPSP), 69–89 (WALM…LGLL), 98–118 (QLSM…LTGL), 139–159 (IPAL…ALGV), 167–187 (AGHL…PILP), and 190–210 (SILT…VAMI).

It belongs to the ATPase A chain family. As to quaternary structure, component of the ATP synthase complex composed at least of ATP5F1A/subunit alpha, ATP5F1B/subunit beta, ATP5MC1/subunit c (homooctomer), MT-ATP6/subunit a, MT-ATP8/subunit 8, ATP5ME/subunit e, ATP5MF/subunit f, ATP5MG/subunit g, ATP5MK/subunit k, ATP5MJ/subunit j, ATP5F1C/subunit gamma, ATP5F1D/subunit delta, ATP5F1E/subunit epsilon, ATP5PF/subunit F6, ATP5PB/subunit b, ATP5PD/subunit d, ATP5PO/subunit OSCP. ATP synthase complex consists of a soluble F(1) head domain (subunits alpha(3) and beta(3)) - the catalytic core - and a membrane F(0) domain - the membrane proton channel (subunits c, a, 8, e, f, g, k and j). These two domains are linked by a central stalk (subunits gamma, delta, and epsilon) rotating inside the F1 region and a stationary peripheral stalk (subunits F6, b, d, and OSCP). Interacts with DNAJC30; interaction is direct.

It is found in the mitochondrion inner membrane. It catalyses the reaction H(+)(in) = H(+)(out). In terms of biological role, subunit a, of the mitochondrial membrane ATP synthase complex (F(1)F(0) ATP synthase or Complex V) that produces ATP from ADP in the presence of a proton gradient across the membrane which is generated by electron transport complexes of the respiratory chain. ATP synthase complex consist of a soluble F(1) head domain - the catalytic core - and a membrane F(1) domain - the membrane proton channel. These two domains are linked by a central stalk rotating inside the F(1) region and a stationary peripheral stalk. During catalysis, ATP synthesis in the catalytic domain of F(1) is coupled via a rotary mechanism of the central stalk subunits to proton translocation. With the subunit c (ATP5MC1), forms the proton-conducting channel in the F(0) domain, that contains two crucial half-channels (inlet and outlet) that facilitate proton movement from the mitochondrial intermembrane space (IMS) into the matrix. Protons are taken up via the inlet half-channel and released through the outlet half-channel, following a Grotthuss mechanism. In Anas platyrhynchos (Mallard), this protein is ATP synthase F(0) complex subunit a.